The following is a 414-amino-acid chain: 3-isopropylmalate dehydratase large subunit (414 aa).

Positions 295, 353, and 356 each coordinate [4Fe-4S] cluster.

The protein belongs to the aconitase/IPM isomerase family. LeuC type 2 subfamily. As to quaternary structure, heterodimer of LeuC and LeuD. [4Fe-4S] cluster serves as cofactor.

It carries out the reaction (2R,3S)-3-isopropylmalate = (2S)-2-isopropylmalate. It participates in amino-acid biosynthesis; L-leucine biosynthesis; L-leucine from 3-methyl-2-oxobutanoate: step 2/4. In terms of biological role, catalyzes the isomerization between 2-isopropylmalate and 3-isopropylmalate, via the formation of 2-isopropylmaleate. The protein is 3-isopropylmalate dehydratase large subunit of Pyrobaculum islandicum (strain DSM 4184 / JCM 9189 / GEO3).